The chain runs to 234 residues: Large ribosomal subunit protein uL1 (234 aa).

It belongs to the universal ribosomal protein uL1 family. Part of the 50S ribosomal subunit.

Binds directly to 23S rRNA. The L1 stalk is quite mobile in the ribosome, and is involved in E site tRNA release. Its function is as follows. Protein L1 is also a translational repressor protein, it controls the translation of the L11 operon by binding to its mRNA. In Yersinia pseudotuberculosis serotype O:1b (strain IP 31758), this protein is Large ribosomal subunit protein uL1.